We begin with the raw amino-acid sequence, 218 residues long: MDKSESTSAGRNRRRRPRRGSRSAPSSADANFRVLSQQLSRLNKTLAAGRPTINHPTFVGSERCKPGYTFTSITLKPPKIDRGSYYGKRLLLPDSVTEYDKKLVSRIQIRVNPLPKFDSTVWVTVRKVPASSDLSVAAISAMFADGASPVLVYQYAAFGVQANNKLLYDLSAMRADIGDMRKYAVLVYSKDDALETDELVLHVDIEHQRIPTSRVLPV.

The residue at position 1 (Met1) is an N-acetylmethionine; by host. Residues Met1–Ala28 are disordered. The span at Arg11 to Ser21 shows a compositional bias: basic residues.

The protein belongs to the cucumovirus capsid protein family.

It is found in the virion. Its function is as follows. Capsid protein. Probably binds RNA and plays a role in packaging. The protein is Capsid protein of Cucumis sativus (Cucumber).